Reading from the N-terminus, the 436-residue chain is 23S rRNA (uracil(1939)-C(5))-methyltransferase RlmD (436 aa).

One can recognise a TRAM domain in the interval 10 to 68; the sequence is KQKTTQKIVAEIQDLDYQGLGVAKIQGKTWFIENALPTEKVEAVVTDEKRQYGLATAQK. [4Fe-4S] cluster contacts are provided by cysteine 81, cysteine 87, cysteine 90, and cysteine 168. Positions 270, 299, 304, 320, 347, and 368 each coordinate S-adenosyl-L-methionine. Residue cysteine 394 is the Nucleophile of the active site.

Belongs to the class I-like SAM-binding methyltransferase superfamily. RNA M5U methyltransferase family. RlmD subfamily.

The catalysed reaction is uridine(1939) in 23S rRNA + S-adenosyl-L-methionine = 5-methyluridine(1939) in 23S rRNA + S-adenosyl-L-homocysteine + H(+). Catalyzes the formation of 5-methyl-uridine at position 1939 (m5U1939) in 23S rRNA. This Haemophilus parainfluenzae (strain T3T1) protein is 23S rRNA (uracil(1939)-C(5))-methyltransferase RlmD.